Reading from the N-terminus, the 393-residue chain is Acetate kinase (393 aa).

Asn-7 contributes to the Mg(2+) binding site. Position 14 (Lys-14) interacts with ATP. Arg-87 provides a ligand contact to substrate. The Proton donor/acceptor role is filled by Asp-144. ATP-binding positions include 202–206 (HIGNG), 277–279 (DLR), and 326–330 (GVGEN). Glu-380 contributes to the Mg(2+) binding site.

Belongs to the acetokinase family. Homodimer. Requires Mg(2+) as cofactor. Mn(2+) is required as a cofactor.

The protein resides in the cytoplasm. It catalyses the reaction acetate + ATP = acetyl phosphate + ADP. Its pathway is metabolic intermediate biosynthesis; acetyl-CoA biosynthesis; acetyl-CoA from acetate: step 1/2. In terms of biological role, catalyzes the formation of acetyl phosphate from acetate and ATP. Can also catalyze the reverse reaction. This is Acetate kinase from Mycoplasmopsis pulmonis (strain UAB CTIP) (Mycoplasma pulmonis).